We begin with the raw amino-acid sequence, 1025 residues long: Multidrug resistance protein MdtC (1025 aa).

The next 12 membrane-spanning stretches (helical) occupy residues 3 to 23, 333 to 353, 360 to 380, 387 to 407, 431 to 451, 469 to 489, 528 to 548, 853 to 873, 875 to 895, 897 to 917, 953 to 973, and 984 to 1004; these read FFAL…AITL, EVEQ…FLFL, IIPA…MYLC, LSLM…IVVL, VGFT…PLLL, VAIG…CGWM, LVGV…ISIP, VILI…LYES, VHPL…LLAL, LFNA…IGIV, PIMM…LSGG, and ITIV…TPVV.

It belongs to the resistance-nodulation-cell division (RND) (TC 2.A.6) family. MdtC subfamily. As to quaternary structure, part of a tripartite efflux system composed of MdtA, MdtB and MdtC. MdtC forms a heteromultimer with MdtB.

The protein localises to the cell inner membrane. The MdtABC tripartite complex confers resistance against novobiocin and deoxycholate. This Escherichia coli O9:H4 (strain HS) protein is Multidrug resistance protein MdtC.